The primary structure comprises 408 residues: uncharacterized protein (408 aa).

Residues 376–386 show a composition bias toward polar residues; sequence NELNDPNSVYN. The disordered stretch occupies residues 376-408; that stretch reads NELNDPNSVYNSPEFDHQGDQKKLTEENGCVVQ. The span at 389–401 shows a compositional bias: basic and acidic residues; that stretch reads EFDHQGDQKKLTE.

This is an uncharacterized protein from Acanthamoeba polyphaga (Amoeba).